A 276-amino-acid chain; its full sequence is Ribosomal RNA small subunit methyltransferase A (276 aa).

The S-adenosyl-L-methionine site is built by His15, Leu17, Gly42, Glu64, Asp89, and Asn108.

This sequence belongs to the class I-like SAM-binding methyltransferase superfamily. rRNA adenine N(6)-methyltransferase family. RsmA subfamily.

Its subcellular location is the cytoplasm. It catalyses the reaction adenosine(1518)/adenosine(1519) in 16S rRNA + 4 S-adenosyl-L-methionine = N(6)-dimethyladenosine(1518)/N(6)-dimethyladenosine(1519) in 16S rRNA + 4 S-adenosyl-L-homocysteine + 4 H(+). In terms of biological role, specifically dimethylates two adjacent adenosines (A1518 and A1519) in the loop of a conserved hairpin near the 3'-end of 16S rRNA in the 30S particle. May play a critical role in biogenesis of 30S subunits. The protein is Ribosomal RNA small subunit methyltransferase A of Prochlorococcus marinus (strain MIT 9515).